The sequence spans 259 residues: Gene 2 protein (259 aa).

Composition is skewed to basic and acidic residues over residues 1–12 and 21–36; these read MPPTELEKKRGE and QKQH…AKRK. The disordered stretch occupies residues 1–36; the sequence is MPPTELEKKRGEYNQIAIDAQKQHAPTDEKREAKRK.

The polypeptide is Gene 2 protein (2) (Mycobacterium (Mycobacteriophage L5)).